A 637-amino-acid chain; its full sequence is Protein kinase domain-containing protein ppk3 (637 aa).

The 296-residue stretch at 1–296 (MDFIKSAASF…QLLSSKLEVI (296 aa)) folds into the Protein kinase domain. The HEAT repeat unit spans residues 414 to 450 (KTLNNELLRSLAVVQNDQHPTLRTNSTICLGKIAEYL). Over residues 576 to 586 (NDTTEIKEKKN) the composition is skewed to basic and acidic residues. The tract at residues 576–637 (NDTTEIKEKK…ENNVEESWGL (62 aa)) is disordered. Acidic residues predominate over residues 608–631 (ETEEQIDESWMENWNDEEETENNV).

It localises to the golgi apparatus. This is Protein kinase domain-containing protein ppk3 (ppk3) from Schizosaccharomyces pombe (strain 972 / ATCC 24843) (Fission yeast).